Here is a 279-residue protein sequence, read N- to C-terminus: MRFSVDLKAYAYPDGTVALSDIRFQVARGEFCGILGSNGSGKTTLLKIMDGLIREYDGSVLLDGRDVRSLQPKDIYRTVGLVFQNPDDQLFAHTVFEDVAFGPRNMGFAEAEVKARVERALEAVDLAGAAAKQIHHLSYGQKKRACIAGLLAMGHEVLLMDEPTAGLDPMGEYRMMELLTRLNRQEGVTIVMATHSVDLVPLFLHRLYILSRGRIVRGGPPEEVFTAPAEMESVKLRLPHIAELIHRLKHEDGVPFRRTPLTIGEARREIMELMETTRS.

The ABC transporter domain maps to 1–237 (MRFSVDLKAY…PAEMESVKLR (237 aa)). 36-43 (GSNGSGKT) is an ATP binding site.

It belongs to the ABC transporter superfamily.

It localises to the cell inner membrane. Functionally, probably part of an ABC transporter complex. Responsible for energy coupling to the transport system. The polypeptide is Putative ABC transporter ATP-binding protein GSU3001 (Geobacter sulfurreducens (strain ATCC 51573 / DSM 12127 / PCA)).